The sequence spans 675 residues: Putative exonuclease GOR (675 aa).

Positions 66-79 are enriched in basic and acidic residues; that stretch reads VAKEAAPEASRHLG. Disordered regions lie at residues 66 to 90 and 225 to 263; these read VAKE…APEG and AKRT…TATT. A GOR1-125 epitope region spans residues 358 to 483; it reads MPGLSRAALY…VRDGRKESLD (126 aa).

This sequence belongs to the REXO1/REXO3 family.

It is found in the cytoplasm. It localises to the nucleus. This is Putative exonuclease GOR (REXO1L1P) from Homo sapiens (Human).